Reading from the N-terminus, the 492-residue chain is Beta-Ala-His dipeptidase (492 aa).

Zn(2+) is bound at residue His107. The active site involves Asp109. Asp140 serves as a coordination point for Zn(2+). The active-site Proton acceptor is Glu174. Residue Glu175 coordinates Zn(2+). Ser194 is subject to Phosphoserine. Zn(2+) is bound by residues Asp203 and His453.

Belongs to the peptidase M20A family. In terms of assembly, homodimer. It depends on Zn(2+) as a cofactor. In terms of tissue distribution, detected exclusively in kidney.

The protein resides in the secreted. It catalyses the reaction Preferential hydrolysis of the beta-Ala-|-His dipeptide (carnosine), and also anserine, Xaa-|-His dipeptides and other dipeptides including homocarnosine.. It carries out the reaction carnosine + H2O = beta-alanine + L-histidine. The catalysed reaction is anserine + H2O = N(pros)-methyl-L-histidine + beta-alanine. The enzyme catalyses L-alanyl-L-histidine + H2O = L-histidine + L-alanine. It catalyses the reaction glycyl-L-histidine + H2O = L-histidine + glycine. It carries out the reaction L-homocarnosine + H2O = 4-aminobutanoate + L-histidine. Catalyzes the peptide bond hydrolysis in Xaa-His dipeptides, displaying the highest activity toward carnosine (beta-alanyl-L-histidine) and anserine (beta-alanyl-3-methyl-histidine). The chain is Beta-Ala-His dipeptidase (Cndp1) from Rattus norvegicus (Rat).